The chain runs to 358 residues: Phosphoserine aminotransferase (358 aa).

Arginine 41 contributes to the L-glutamate binding site. Pyridoxal 5'-phosphate is bound by residues 75 to 76 (AS), tryptophan 100, threonine 148, aspartate 167, and glutamine 190. Residue lysine 191 is modified to N6-(pyridoxal phosphate)lysine. 233–234 (NT) lines the pyridoxal 5'-phosphate pocket.

The protein belongs to the class-V pyridoxal-phosphate-dependent aminotransferase family. SerC subfamily. As to quaternary structure, homodimer. Pyridoxal 5'-phosphate is required as a cofactor.

It localises to the cytoplasm. The catalysed reaction is O-phospho-L-serine + 2-oxoglutarate = 3-phosphooxypyruvate + L-glutamate. The enzyme catalyses 4-(phosphooxy)-L-threonine + 2-oxoglutarate = (R)-3-hydroxy-2-oxo-4-phosphooxybutanoate + L-glutamate. The protein operates within amino-acid biosynthesis; L-serine biosynthesis; L-serine from 3-phospho-D-glycerate: step 2/3. It functions in the pathway cofactor biosynthesis; pyridoxine 5'-phosphate biosynthesis; pyridoxine 5'-phosphate from D-erythrose 4-phosphate: step 3/5. Its function is as follows. Catalyzes the reversible conversion of 3-phosphohydroxypyruvate to phosphoserine and of 3-hydroxy-2-oxo-4-phosphonooxybutanoate to phosphohydroxythreonine. This chain is Phosphoserine aminotransferase, found in Campylobacter lari (strain RM2100 / D67 / ATCC BAA-1060).